The sequence spans 362 residues: Transcription factor bHLH128 (362 aa).

A compositionally biased stretch (low complexity) spans 1–16; sequence MYQSSSSTSSSSQRSS. 4 disordered regions span residues 1–23, 78–106, 120–140, and 162–184; these read MYQS…GGGL, SDST…SNKD, SQQH…YSLA, and LNQP…HSRL. Positions 78–96 are enriched in polar residues; the sequence is SDSTTCGVNNSSDGQKQLG. Positions 162 to 173 are enriched in polar residues; sequence LNQPTSDYSPQG. Serine 189 carries the post-translational modification Phosphoserine. The 51-residue stretch at 289 to 339 folds into the bHLH domain; sequence CATHPRSIAERERRTRISGKLKKLQDLVPNMDKQTSYSDMLDLAVQHIKGL.

As to quaternary structure, homodimer.

Its subcellular location is the nucleus. This chain is Transcription factor bHLH128 (BHLH128), found in Arabidopsis thaliana (Mouse-ear cress).